A 272-amino-acid chain; its full sequence is NH(3)-dependent NAD(+) synthetase (272 aa).

45–52 lines the ATP pocket; it reads GISGGQDS. Residue D51 coordinates Mg(2+). Residue R138 coordinates deamido-NAD(+). T158 provides a ligand contact to ATP. E163 contributes to the Mg(2+) binding site. Positions 171 and 178 each coordinate deamido-NAD(+). K187 and T209 together coordinate ATP. Residue 258 to 259 coordinates deamido-NAD(+); it reads HK.

Belongs to the NAD synthetase family. In terms of assembly, homodimer.

The catalysed reaction is deamido-NAD(+) + NH4(+) + ATP = AMP + diphosphate + NAD(+) + H(+). It participates in cofactor biosynthesis; NAD(+) biosynthesis; NAD(+) from deamido-NAD(+) (ammonia route): step 1/1. Its function is as follows. Catalyzes the ATP-dependent amidation of deamido-NAD to form NAD. Uses ammonia as a nitrogen source. This Bacillus cereus (strain 03BB102) protein is NH(3)-dependent NAD(+) synthetase.